The chain runs to 334 residues: Glycerol-3-phosphate dehydrogenase [NAD(P)+] (334 aa).

Positions 14 and 108 each coordinate NADPH. Sn-glycerol 3-phosphate-binding residues include lysine 108, glycine 140, and serine 142. Alanine 144 provides a ligand contact to NADPH. Lysine 195, aspartate 248, serine 258, arginine 259, and asparagine 260 together coordinate sn-glycerol 3-phosphate. The active-site Proton acceptor is lysine 195. Residue arginine 259 participates in NADPH binding. Residue glutamate 285 coordinates NADPH.

It belongs to the NAD-dependent glycerol-3-phosphate dehydrogenase family.

The protein localises to the cytoplasm. The enzyme catalyses sn-glycerol 3-phosphate + NAD(+) = dihydroxyacetone phosphate + NADH + H(+). It catalyses the reaction sn-glycerol 3-phosphate + NADP(+) = dihydroxyacetone phosphate + NADPH + H(+). The protein operates within membrane lipid metabolism; glycerophospholipid metabolism. Its function is as follows. Catalyzes the reduction of the glycolytic intermediate dihydroxyacetone phosphate (DHAP) to sn-glycerol 3-phosphate (G3P), the key precursor for phospholipid synthesis. This Mesoplasma florum (strain ATCC 33453 / NBRC 100688 / NCTC 11704 / L1) (Acholeplasma florum) protein is Glycerol-3-phosphate dehydrogenase [NAD(P)+].